Here is an 828-residue protein sequence, read N- to C-terminus: Kinesin-associated protein 3 (828 aa).

ARM repeat units lie at residues 332–372 (YVEN…NLSF), 373–411 (DTDL…HVSQ), and 577–611 (DDSC…CQIV).

Heterotrimer of a 115 kDa subunit (KAP115) and two kinesin-like subunits of 95 kDa (KRP95) and 85 kDa (KRP85).

Functionally, binds to the tail domain of the KRP85/KRP95 heterodimer to form a heterotrimeric kinesin-II complex and may regulate the spindle vesicle targeting of this complex. In Strongylocentrotus purpuratus (Purple sea urchin), this protein is Kinesin-associated protein 3 (KAP115).